A 340-amino-acid polypeptide reads, in one-letter code: Dihydroorotate dehydrogenase (quinone) (340 aa).

FMN-binding positions include 65 to 69 and T89; that span reads AGADK. Substrate is bound at residue K69. Position 114-118 (114-118) interacts with substrate; the sequence is NRNGF. FMN-binding residues include N142 and N175. Position 175 (N175) interacts with substrate. The active-site Nucleophile is S178. N180 is a binding site for substrate. K220 and T248 together coordinate FMN. Residue 249–250 coordinates substrate; it reads NT. Residues G271, G300, and 321-322 each bind FMN; that span reads YS.

The protein belongs to the dihydroorotate dehydrogenase family. Type 2 subfamily. As to quaternary structure, monomer. FMN serves as cofactor.

Its subcellular location is the cell membrane. It carries out the reaction (S)-dihydroorotate + a quinone = orotate + a quinol. It functions in the pathway pyrimidine metabolism; UMP biosynthesis via de novo pathway; orotate from (S)-dihydroorotate (quinone route): step 1/1. In terms of biological role, catalyzes the conversion of dihydroorotate to orotate with quinone as electron acceptor. The polypeptide is Dihydroorotate dehydrogenase (quinone) (Mannheimia succiniciproducens (strain KCTC 0769BP / MBEL55E)).